A 400-amino-acid polypeptide reads, in one-letter code: Dehydrogenase efuE (400 aa).

Residues A222 to I223, T303 to R305, and D329 contribute to the NAD(+) site. R305 is a catalytic residue. E334 is an active-site residue. The Proton donor role is filled by H352. H352–G355 is a binding site for NAD(+).

It belongs to the D-isomer specific 2-hydroxyacid dehydrogenase family.

It functions in the pathway secondary metabolite biosynthesis; terpenoid biosynthesis. Dehydrogenase; part of the gene cluster that mediates the biosynthesis of enfumafungin, a glycosylated fernene-type triterpenoid with potent antifungal activity, mediated by its interaction with beta-1,3-glucan synthase and the fungal cell wall. The pathway begins with the terpene cyclase-glycosyl transferase fusion protein that most likely uses 2,3-oxidosqualene as substrate and catalyzes glycosylation immediately after cyclization. The fernene glycoside then could be processed by the desaturase efuI which catalyzes isomerization of a double bond established by efuA to form the core structure. The latter would then undergo a series of hydroxylations in unknown order at C-2, C-19, C-23 and C-25, which would be catalyzed by two of the three cytochrome P450 monooxygenases efuB, efuG or efuH. The hydroxy-group at C-25 becomes oxidized by the dehydrogenase efuE to enable a spontaneous, non-enzymatic hemiacetal formation with C-23. After hydroxylation at C-2, acetylation by the acetyltransferase efuC takes place. The final steps in enfumafungin biosynthesis require expansion of the 5-membered ring by lactonization via a Baeyer-Villiger reaction mediated by one of the BGC's cytochrome P450 monooxygenases (efuB, efuG or efuH) followed by ring cleavage. This type of reaction would establish a double bond between C-20 and C-21 which could be reduced by the reductase efuL to form the final product. The sequence is that of Dehydrogenase efuE from Hormonema carpetanum.